A 635-amino-acid chain; its full sequence is Chaperone protein HtpG (635 aa).

Residues 1 to 336 (MTTAEAAAPE…SADLPLNLSR (336 aa)) are a; substrate-binding. Positions 337 to 556 (EMLQDSAILA…ESGIDRRLEK (220 aa)) are b. Positions 557–635 (LLASAGRLGD…RVMQRGLPTA (79 aa)) are c.

Belongs to the heat shock protein 90 family. Homodimer.

It localises to the cytoplasm. Molecular chaperone. Has ATPase activity. The protein is Chaperone protein HtpG of Azorhizobium caulinodans (strain ATCC 43989 / DSM 5975 / JCM 20966 / LMG 6465 / NBRC 14845 / NCIMB 13405 / ORS 571).